A 260-amino-acid polypeptide reads, in one-letter code: Tryptophan synthase alpha chain (260 aa).

Residues glutamate 52 and aspartate 63 each act as proton acceptor in the active site.

Belongs to the TrpA family. As to quaternary structure, tetramer of two alpha and two beta chains.

The enzyme catalyses (1S,2R)-1-C-(indol-3-yl)glycerol 3-phosphate + L-serine = D-glyceraldehyde 3-phosphate + L-tryptophan + H2O. It participates in amino-acid biosynthesis; L-tryptophan biosynthesis; L-tryptophan from chorismate: step 5/5. The alpha subunit is responsible for the aldol cleavage of indoleglycerol phosphate to indole and glyceraldehyde 3-phosphate. This Streptococcus thermophilus (strain ATCC BAA-491 / LMD-9) protein is Tryptophan synthase alpha chain.